A 344-amino-acid polypeptide reads, in one-letter code: Protein RecA (344 aa).

ATP is bound at residue 64-71 (GPESSGKT).

This sequence belongs to the RecA family.

It localises to the cytoplasm. In terms of biological role, can catalyze the hydrolysis of ATP in the presence of single-stranded DNA, the ATP-dependent uptake of single-stranded DNA by duplex DNA, and the ATP-dependent hybridization of homologous single-stranded DNAs. It interacts with LexA causing its activation and leading to its autocatalytic cleavage. This chain is Protein RecA, found in Paramagnetospirillum magnetotacticum (Aquaspirillum magnetotacticum).